The primary structure comprises 239 residues: MALEAAFSMSFCSFSVPKAIFCERETSSFQRITSRAKGIAGESQVQSSDGVETQVKETSPKVFDKLPERNLDTWSGGRETARGLSGSVVRNTVRKDTTLRHISPSSHSTKVRGDKPEISGGEKKAIVDRSKAYVKLKSLGKEVRDAGYVPETKYVLHDIDEEAKEKALMHHSERLAIAFGIINTPPGTTIRVMKNLRICGDCHNFIKILSSIEDREIIVRDNKRFHHFRDGNCSCGDYW.

Residues 1 to 35 constitute a chloroplast transit peptide; it reads MALEAAFSMSFCSFSVPKAIFCERETSSFQRITSR. Disordered stretches follow at residues 40–59 and 101–122; these read AGESQVQSSDGVETQVKETS and HISPSSHSTKVRGDKPEISGGE. Positions 111–122 are enriched in basic and acidic residues; the sequence is VRGDKPEISGGE. The tract at residues 113–144 is type E(+) motif; that stretch reads GDKPEISGGEKKAIVDRSKAYVKLKSLGKEVR. The interval 145 to 239 is type DYW motif; that stretch reads DAGYVPETKY…DGNCSCGDYW (95 aa).

It belongs to the PPR family. PCMP-H subfamily. As to quaternary structure, interacts with CRR4. Zn(2+) is required as a cofactor.

It localises to the plastid. The protein resides in the chloroplast. Plays a major role in single RNA editing events in chloroplasts. Acts as a site-recognition transacting factor involved in the edition of the site 1 of ndhD (ndhD-1 site corresponding to cytidine-2), which is a plastid-encoded subunit of the NADH-plastoquinone oxidoreductase. The interaction with CRR4 is required for its function in editing the ndhD-1 site. The chain is Pentatricopeptide repeat-containing protein DWY1, chloroplastic from Arabidopsis thaliana (Mouse-ear cress).